The following is a 308-amino-acid chain: 4-hydroxy-3-methylbut-2-enyl diphosphate reductase (308 aa).

Residue cysteine 12 coordinates [4Fe-4S] cluster. Residues histidine 41 and histidine 74 each coordinate (2E)-4-hydroxy-3-methylbut-2-enyl diphosphate. Residues histidine 41 and histidine 74 each coordinate dimethylallyl diphosphate. Isopentenyl diphosphate contacts are provided by histidine 41 and histidine 74. Cysteine 96 lines the [4Fe-4S] cluster pocket. Histidine 124 lines the (2E)-4-hydroxy-3-methylbut-2-enyl diphosphate pocket. Histidine 124 serves as a coordination point for dimethylallyl diphosphate. Histidine 124 is an isopentenyl diphosphate binding site. Glutamate 126 (proton donor) is an active-site residue. Threonine 166 serves as a coordination point for (2E)-4-hydroxy-3-methylbut-2-enyl diphosphate. Cysteine 196 contributes to the [4Fe-4S] cluster binding site. Residues serine 224, serine 225, asparagine 226, and serine 268 each contribute to the (2E)-4-hydroxy-3-methylbut-2-enyl diphosphate site. 4 residues coordinate dimethylallyl diphosphate: serine 224, serine 225, asparagine 226, and serine 268. Residues serine 224, serine 225, asparagine 226, and serine 268 each coordinate isopentenyl diphosphate.

It belongs to the IspH family. [4Fe-4S] cluster is required as a cofactor.

It carries out the reaction isopentenyl diphosphate + 2 oxidized [2Fe-2S]-[ferredoxin] + H2O = (2E)-4-hydroxy-3-methylbut-2-enyl diphosphate + 2 reduced [2Fe-2S]-[ferredoxin] + 2 H(+). The catalysed reaction is dimethylallyl diphosphate + 2 oxidized [2Fe-2S]-[ferredoxin] + H2O = (2E)-4-hydroxy-3-methylbut-2-enyl diphosphate + 2 reduced [2Fe-2S]-[ferredoxin] + 2 H(+). Its pathway is isoprenoid biosynthesis; dimethylallyl diphosphate biosynthesis; dimethylallyl diphosphate from (2E)-4-hydroxy-3-methylbutenyl diphosphate: step 1/1. It functions in the pathway isoprenoid biosynthesis; isopentenyl diphosphate biosynthesis via DXP pathway; isopentenyl diphosphate from 1-deoxy-D-xylulose 5-phosphate: step 6/6. Catalyzes the conversion of 1-hydroxy-2-methyl-2-(E)-butenyl 4-diphosphate (HMBPP) into a mixture of isopentenyl diphosphate (IPP) and dimethylallyl diphosphate (DMAPP). Acts in the terminal step of the DOXP/MEP pathway for isoprenoid precursor biosynthesis. This is 4-hydroxy-3-methylbut-2-enyl diphosphate reductase from Vesicomyosocius okutanii subsp. Calyptogena okutanii (strain HA).